Consider the following 292-residue polypeptide: Carbapenem-hydrolyzing beta-lactamase transcriptional activator (292 aa).

The 58-residue stretch at 5–62 (IPLNALRAFEASARYLNFTKAGLELHVSQAAVSQHVRTLEAILGVNLFKRLPRGLQLT) folds into the HTH lysR-type domain. The segment at residues 22–41 (FTKAGLELHVSQAAVSQHVR) is a DNA-binding region (H-T-H motif).

It belongs to the LysR transcriptional regulatory family.

Functionally, this protein is a positive regulator of gene expression of carbapenem-hydrolyzing beta-lactamase (smeA). Seems to also be a repressor of its own transcription. This is Carbapenem-hydrolyzing beta-lactamase transcriptional activator (smeR) from Serratia marcescens.